Reading from the N-terminus, the 402-residue chain is 4-hydroxy-3-methylbut-2-enyl diphosphate reductase (402 aa).

Cysteine 66 contacts [4Fe-4S] cluster. Position 96 (histidine 96) interacts with (2E)-4-hydroxy-3-methylbut-2-enyl diphosphate. Histidine 96 contributes to the dimethylallyl diphosphate binding site. Histidine 96 lines the isopentenyl diphosphate pocket. A [4Fe-4S] cluster-binding site is contributed by cysteine 157. Histidine 185 serves as a coordination point for (2E)-4-hydroxy-3-methylbut-2-enyl diphosphate. Dimethylallyl diphosphate is bound at residue histidine 185. Histidine 185 contacts isopentenyl diphosphate. Glutamate 187 functions as the Proton donor in the catalytic mechanism. (2E)-4-hydroxy-3-methylbut-2-enyl diphosphate is bound at residue threonine 250. Cysteine 288 contributes to the [4Fe-4S] cluster binding site. (2E)-4-hydroxy-3-methylbut-2-enyl diphosphate contacts are provided by serine 317, serine 318, asparagine 319, and serine 379. 4 residues coordinate dimethylallyl diphosphate: serine 317, serine 318, asparagine 319, and serine 379. 4 residues coordinate isopentenyl diphosphate: serine 317, serine 318, asparagine 319, and serine 379.

This sequence belongs to the IspH family. [4Fe-4S] cluster is required as a cofactor.

It catalyses the reaction isopentenyl diphosphate + 2 oxidized [2Fe-2S]-[ferredoxin] + H2O = (2E)-4-hydroxy-3-methylbut-2-enyl diphosphate + 2 reduced [2Fe-2S]-[ferredoxin] + 2 H(+). The catalysed reaction is dimethylallyl diphosphate + 2 oxidized [2Fe-2S]-[ferredoxin] + H2O = (2E)-4-hydroxy-3-methylbut-2-enyl diphosphate + 2 reduced [2Fe-2S]-[ferredoxin] + 2 H(+). Its pathway is isoprenoid biosynthesis; dimethylallyl diphosphate biosynthesis; dimethylallyl diphosphate from (2E)-4-hydroxy-3-methylbutenyl diphosphate: step 1/1. The protein operates within isoprenoid biosynthesis; isopentenyl diphosphate biosynthesis via DXP pathway; isopentenyl diphosphate from 1-deoxy-D-xylulose 5-phosphate: step 6/6. Catalyzes the conversion of 1-hydroxy-2-methyl-2-(E)-butenyl 4-diphosphate (HMBPP) into a mixture of isopentenyl diphosphate (IPP) and dimethylallyl diphosphate (DMAPP). Acts in the terminal step of the DOXP/MEP pathway for isoprenoid precursor biosynthesis. The protein is 4-hydroxy-3-methylbut-2-enyl diphosphate reductase of Thermosynechococcus vestitus (strain NIES-2133 / IAM M-273 / BP-1).